The sequence spans 250 residues: V-type proton ATPase subunit D (250 aa).

It belongs to the V-ATPase D subunit family. As to quaternary structure, V-ATPase is a heteromultimeric enzyme made up of two complexes: the ATP-hydrolytic V1 complex and the proton translocation V0 complex. The V1 complex consists of three catalytic AB heterodimers that form a heterohexamer, three peripheral stalks each consisting of EG heterodimers, one central rotor including subunits D and F, and the regulatory subunits C and H. The proton translocation complex V0 consists of the proton transport subunit a, a ring of proteolipid subunits c9c'', rotary subunit d, subunits e and f, and two accessory subunits ATP6AP1/Ac45 and ATP6AP2/PRR.

Subunit of the V1 complex of vacuolar(H+)-ATPase (V-ATPase), a multisubunit enzyme composed of a peripheral complex (V1) that hydrolyzes ATP and a membrane integral complex (V0) that translocates protons. V-ATPase is responsible for acidifying and maintaining the pH of intracellular compartments and in some cell types, is targeted to the plasma membrane, where it is responsible for acidifying the extracellular environment. This is V-type proton ATPase subunit D (VATPD) from Suberites domuncula (Sponge).